Consider the following 160-residue polypeptide: Endoribonuclease YbeY (160 aa).

Zn(2+) contacts are provided by histidine 112, histidine 116, and histidine 122.

This sequence belongs to the endoribonuclease YbeY family. The cofactor is Zn(2+).

It is found in the cytoplasm. In terms of biological role, single strand-specific metallo-endoribonuclease involved in late-stage 70S ribosome quality control and in maturation of the 3' terminus of the 16S rRNA. This chain is Endoribonuclease YbeY, found in Maricaulis maris (strain MCS10) (Caulobacter maris).